The following is a 168-amino-acid chain: HTH-type transcriptional regulator IscR (168 aa).

An HTH rrf2-type domain is found at Lys-2 to Ser-131. The segment at residues Leu-28–Lys-51 is a DNA-binding region (H-T-H motif). [2Fe-2S] cluster-binding residues include Cys-92, Cys-98, and Cys-104.

[2Fe-2S] cluster is required as a cofactor.

In terms of biological role, regulates the transcription of several operons and genes involved in the biogenesis of Fe-S clusters and Fe-S-containing proteins. The sequence is that of HTH-type transcriptional regulator IscR from Vibrio vulnificus (strain CMCP6).